The following is a 140-amino-acid chain: HTH-type transcriptional regulator LysM (140 aa).

The 64-residue stretch at 4 to 67 (VDESDLKILE…ELENEIRAIV (64 aa)) folds into the HTH asnC-type domain. A DNA-binding region (H-T-H motif) is located at residues 23-42 (YTSIAKELKISEAAVRKRIE).

In terms of assembly, homotetramer.

The protein resides in the cytoplasm. Its pathway is amino-acid biosynthesis; L-lysine biosynthesis via AAA pathway [regulation]. In terms of biological role, in the absence or at low concentrations of lysine, activates the biosynthesis of this amino acid via the alpha-aminoadipate (AAA) pathway. This is HTH-type transcriptional regulator LysM (lysM) from Sulfurisphaera tokodaii (strain DSM 16993 / JCM 10545 / NBRC 100140 / 7) (Sulfolobus tokodaii).